The chain runs to 420 residues: UDP-N-acetylglucosamine 1-carboxyvinyltransferase (420 aa).

Residue 22-23 (KN) participates in phosphoenolpyruvate binding. UDP-N-acetyl-alpha-D-glucosamine is bound at residue R93. C117 acts as the Proton donor in catalysis. C117 is modified (2-(S-cysteinyl)pyruvic acid O-phosphothioketal). Positions 307 and 329 each coordinate UDP-N-acetyl-alpha-D-glucosamine.

It belongs to the EPSP synthase family. MurA subfamily.

It localises to the cytoplasm. It catalyses the reaction phosphoenolpyruvate + UDP-N-acetyl-alpha-D-glucosamine = UDP-N-acetyl-3-O-(1-carboxyvinyl)-alpha-D-glucosamine + phosphate. It functions in the pathway cell wall biogenesis; peptidoglycan biosynthesis. Cell wall formation. Adds enolpyruvyl to UDP-N-acetylglucosamine. The protein is UDP-N-acetylglucosamine 1-carboxyvinyltransferase of Alteromonas mediterranea (strain DSM 17117 / CIP 110805 / LMG 28347 / Deep ecotype).